The sequence spans 100 residues: Urease subunit gamma (100 aa).

It belongs to the urease gamma subunit family. Heterotrimer of UreA (gamma), UreB (beta) and UreC (alpha) subunits. Three heterotrimers associate to form the active enzyme.

The protein localises to the cytoplasm. It carries out the reaction urea + 2 H2O + H(+) = hydrogencarbonate + 2 NH4(+). The protein operates within nitrogen metabolism; urea degradation; CO(2) and NH(3) from urea (urease route): step 1/1. This Paraburkholderia xenovorans (strain LB400) protein is Urease subunit gamma.